We begin with the raw amino-acid sequence, 1711 residues long: Hybrid PKS-NRPS synthetase TAS1 (1711 aa).

The segment at 43 to 397 is condensation (C) domain; sequence APLSKMQRAL…RNGLNSEHRV (355 aa). An adenylation (A) domain region spans residues 506-907; that stretch reads QQQATLRPEQ…TVLLYGRINN (402 aa). The Carrier 1 domain maps to 1043-1119; that stretch reads LEWAAAKARI…SQVGLVQSRR (77 aa). Serine 1079 is modified (O-(pantetheine 4'-phosphoryl)serine). A compositionally biased stretch (polar residues) spans 1114 to 1127; that stretch reads LVQSRRGSSGSPRT. Positions 1114 to 1159 are disordered; sequence LVQSRRGSSGSPRTVRSHARPQRKAKTPPRQARPETPESDYDQLPD. Basic residues predominate over residues 1128–1140; sequence VRSHARPQRKAKT. A Carrier 2 domain is found at 1159–1236; sequence DLRDDVQQSI…AQVELLGRFT (78 aa). Serine 1195 is subject to O-(pantetheine 4'-phosphoryl)serine. The region spanning 1266 to 1683 is the Ketosynthase family 3 (KS3) domain; the sequence is REQYAIVGMS…GSTAHVVLSA (418 aa). Catalysis depends on for beta-ketoacyl synthase activity residues cysteine 1429, histidine 1565, and asparagine 1608.

This sequence in the N-terminal section; belongs to the NRP synthetase family. Pantetheine 4'-phosphate is required as a cofactor.

It carries out the reaction acetoacetyl-CoA + L-isoleucine + ATP = tenuazonic acid + AMP + diphosphate + CoA + 2 H(+). Functionally, hybrid PKS-NRPS synthetase that mediates the biosynthesis of the toxin tenuazonic acid (TeA), an inhibitor of protein biosynthesis on ribosomes by suppressing the release of new protein. TAS1 alone is sufficient for TeA synthesis via the condensation of isoleucine (Ile) with acetoacetyl-CoA by the N-terminal NRPS module and subsequent cyclization conducted by the C-terminal KS domain. This Botryobasidium botryosum (strain FD-172 SS1) protein is Hybrid PKS-NRPS synthetase TAS1.